A 271-amino-acid chain; its full sequence is Intercellular adhesion molecule 4 (271 aa).

Residues 1 to 22 (MGSLFPLSLLFFLAAAYPGVGS) form the signal peptide. Residues 23-240 (ALGRRTKRAQ…MLAWSPAPTA (218 aa)) are Extracellular-facing. Ig-like C2-type domains lie at 62–124 (GKSV…TRWA) and 146–217 (GRKY…LNLD). Residues N68, N78, N190, and N223 are each glycosylated (N-linked (GlcNAc...) asparagine). 4 cysteine pairs are disulfide-bonded: C69/C113, C69/C117, C73/C117, and C153/C210. The helical transmembrane segment at 241-261 (LASGSIAALVGILLTVGAAYL) threads the bilayer. Topologically, residues 262-271 (CKCLAMKSQA) are cytoplasmic.

The protein belongs to the immunoglobulin superfamily. ICAM family. N- and O-glycosylated. Erythrocytes.

It is found in the cell membrane. The protein localises to the secreted. In terms of biological role, ICAM proteins are ligands for the leukocyte adhesion protein LFA-1 (integrin alpha-L/beta-2). ICAM4 is also a ligand for alpha-4/beta-1 and alpha-V integrins. This Homo sapiens (Human) protein is Intercellular adhesion molecule 4 (ICAM4).